The following is a 421-amino-acid chain: UDP-N-acetylglucosamine 1-carboxyvinyltransferase (421 aa).

Residue 22-23 (KN) coordinates phosphoenolpyruvate. Arg92 contacts UDP-N-acetyl-alpha-D-glucosamine. The Proton donor role is filled by Asp116. UDP-N-acetyl-alpha-D-glucosamine is bound by residues 121 to 125 (RPIDQ), Asp307, and Ile330.

Belongs to the EPSP synthase family. MurA subfamily.

The protein localises to the cytoplasm. The enzyme catalyses phosphoenolpyruvate + UDP-N-acetyl-alpha-D-glucosamine = UDP-N-acetyl-3-O-(1-carboxyvinyl)-alpha-D-glucosamine + phosphate. Its pathway is cell wall biogenesis; peptidoglycan biosynthesis. Its function is as follows. Cell wall formation. Adds enolpyruvyl to UDP-N-acetylglucosamine. The protein is UDP-N-acetylglucosamine 1-carboxyvinyltransferase of Lactobacillus johnsonii (strain CNCM I-12250 / La1 / NCC 533).